The sequence spans 285 residues: Ribosomal protein L11 methyltransferase (285 aa).

Positions 131, 154, 176, and 223 each coordinate S-adenosyl-L-methionine.

Belongs to the methyltransferase superfamily. PrmA family.

The protein localises to the cytoplasm. It carries out the reaction L-lysyl-[protein] + 3 S-adenosyl-L-methionine = N(6),N(6),N(6)-trimethyl-L-lysyl-[protein] + 3 S-adenosyl-L-homocysteine + 3 H(+). Methylates ribosomal protein L11. The polypeptide is Ribosomal protein L11 methyltransferase (Brucella abortus (strain S19)).